The chain runs to 219 residues: Large ribosomal subunit protein bL25 (219 aa).

The disordered stretch occupies residues 193-219 (VSSTELEETPEVPASAVPTTDQGESAE). A compositionally biased stretch (polar residues) spans 209 to 219 (VPTTDQGESAE).

The protein belongs to the bacterial ribosomal protein bL25 family. CTC subfamily. As to quaternary structure, part of the 50S ribosomal subunit; part of the 5S rRNA/L5/L18/L25 subcomplex. Contacts the 5S rRNA. Binds to the 5S rRNA independently of L5 and L18.

This is one of the proteins that binds to the 5S RNA in the ribosome where it forms part of the central protuberance. This Legionella pneumophila (strain Corby) protein is Large ribosomal subunit protein bL25.